The following is a 442-amino-acid chain: 26S proteasome regulatory subunit 6A (442 aa).

Ser-12 bears the Phosphoserine mark. Gly-230–Thr-237 lines the ATP pocket. Ser-379 carries the phosphoserine modification.

This sequence belongs to the AAA ATPase family. Component of the 19S proteasome regulatory particle complex. The 26S proteasome consists of a 20S core particle (CP) and two 19S regulatory subunits (RP). The regulatory particle is made of a lid composed of 9 subunits, a base containing 6 ATPases including PSMC3 and few additional components. Interacts with PAAF1.

It localises to the cytoplasm. Its subcellular location is the nucleus. Functionally, component of the 26S proteasome, a multiprotein complex involved in the ATP-dependent degradation of ubiquitinated proteins. This complex plays a key role in the maintenance of protein homeostasis by removing misfolded or damaged proteins, which could impair cellular functions, and by removing proteins whose functions are no longer required. Therefore, the proteasome participates in numerous cellular processes, including cell cycle progression, apoptosis, or DNA damage repair. PSMC3 belongs to the heterohexameric ring of AAA (ATPases associated with diverse cellular activities) proteins that unfolds ubiquitinated target proteins that are concurrently translocated into a proteolytic chamber and degraded into peptides. The polypeptide is 26S proteasome regulatory subunit 6A (Psmc3) (Mus musculus (Mouse)).